The chain runs to 101 residues: MIPGEIIAASGDIELNAGAPTVTLEVSNTGDRPVQVGSHYHFAETNAGLSFDRAAAHGKRLDIPSGTAVRFEPGQTRSVTLIPLSGRREVYGFRQLVMGKL.

It belongs to the urease beta subunit family. In terms of assembly, heterotrimer of UreA (gamma), UreB (beta) and UreC (alpha) subunits. Three heterotrimers associate to form the active enzyme.

The protein localises to the cytoplasm. The catalysed reaction is urea + 2 H2O + H(+) = hydrogencarbonate + 2 NH4(+). The protein operates within nitrogen metabolism; urea degradation; CO(2) and NH(3) from urea (urease route): step 1/1. This Rhizobium etli (strain ATCC 51251 / DSM 11541 / JCM 21823 / NBRC 15573 / CFN 42) protein is Urease subunit beta.